Here is a 246-residue protein sequence, read N- to C-terminus: tRNA (guanine-N(7)-)-methyltransferase (246 aa).

S-adenosyl-L-methionine contacts are provided by Glu76, Glu101, Asp128, and Asp151. Asp151 is an active-site residue. Lys155 is a substrate binding site. The tract at residues 157–162 (RHNKRR) is interaction with RNA. Substrate is bound by residues Asp187 and 222–225 (TKFE).

Belongs to the class I-like SAM-binding methyltransferase superfamily. TrmB family.

The enzyme catalyses guanosine(46) in tRNA + S-adenosyl-L-methionine = N(7)-methylguanosine(46) in tRNA + S-adenosyl-L-homocysteine. Its pathway is tRNA modification; N(7)-methylguanine-tRNA biosynthesis. Its function is as follows. Catalyzes the formation of N(7)-methylguanine at position 46 (m7G46) in tRNA. The polypeptide is tRNA (guanine-N(7)-)-methyltransferase (Dechloromonas aromatica (strain RCB)).